The chain runs to 254 residues: Large ribosomal subunit protein uL4 (254 aa).

Residues 45–70 (PWGNDPEAGKRTSAKGWGSGRGTARV) form a disordered region.

It belongs to the universal ribosomal protein uL4 family. Part of the 50S ribosomal subunit.

In terms of biological role, one of the primary rRNA binding proteins, this protein initially binds near the 5'-end of the 23S rRNA. It is important during the early stages of 50S assembly. It makes multiple contacts with different domains of the 23S rRNA in the assembled 50S subunit and ribosome. Forms part of the polypeptide exit tunnel. This Methanobrevibacter smithii (strain ATCC 35061 / DSM 861 / OCM 144 / PS) protein is Large ribosomal subunit protein uL4.